Reading from the N-terminus, the 388-residue chain is Formate-dependent phosphoribosylglycinamide formyltransferase (388 aa).

N(1)-(5-phospho-beta-D-ribosyl)glycinamide contacts are provided by residues 15–16 (EL) and Glu-75. Residues Arg-107, Lys-148, 153-158 (SSGKGQ), 188-191 (EEFL), and Glu-196 contribute to the ATP site. An ATP-grasp domain is found at 112 to 302 (DLASAELALL…EFELHLRAVL (191 aa)). The Mg(2+) site is built by Glu-261 and Glu-273. Residues Asp-280, Lys-350, and 357–358 (RR) contribute to the N(1)-(5-phospho-beta-D-ribosyl)glycinamide site.

Belongs to the PurK/PurT family. As to quaternary structure, homodimer.

It carries out the reaction N(1)-(5-phospho-beta-D-ribosyl)glycinamide + formate + ATP = N(2)-formyl-N(1)-(5-phospho-beta-D-ribosyl)glycinamide + ADP + phosphate + H(+). The protein operates within purine metabolism; IMP biosynthesis via de novo pathway; N(2)-formyl-N(1)-(5-phospho-D-ribosyl)glycinamide from N(1)-(5-phospho-D-ribosyl)glycinamide (formate route): step 1/1. Its function is as follows. Involved in the de novo purine biosynthesis. Catalyzes the transfer of formate to 5-phospho-ribosyl-glycinamide (GAR), producing 5-phospho-ribosyl-N-formylglycinamide (FGAR). Formate is provided by PurU via hydrolysis of 10-formyl-tetrahydrofolate. The polypeptide is Formate-dependent phosphoribosylglycinamide formyltransferase (Prochlorococcus marinus (strain MIT 9313)).